Here is a 119-residue protein sequence, read N- to C-terminus: Large ribosomal subunit protein bL20 (119 aa).

It belongs to the bacterial ribosomal protein bL20 family.

In terms of biological role, binds directly to 23S ribosomal RNA and is necessary for the in vitro assembly process of the 50S ribosomal subunit. It is not involved in the protein synthesizing functions of that subunit. This is Large ribosomal subunit protein bL20 from Nitrobacter hamburgensis (strain DSM 10229 / NCIMB 13809 / X14).